Consider the following 344-residue polypeptide: Histone-lysine N-methyltransferase, H3 lysine-9 specific KMT1 (344 aa).

The Pre-SET domain occupies 79-174 (SGCSCAKDSE…DCPNRVVERG (96 aa)). Positions 81, 83, 89, 94, 96, 156, 160, 162, 166, and 272 each coordinate Zn(2+). The region spanning 177-312 (IPLEIFRTPD…EGEELTFDYV (136 aa)) is the SET domain. Tyrosine 311 is an S-adenosyl-L-methionine binding site. A Post-SET domain is found at 328-344 (HMTRCLCGSKKCRKFLW). Residues cysteine 332, cysteine 334, and cysteine 339 each coordinate Zn(2+).

The protein belongs to the class V-like SAM-binding methyltransferase superfamily.

It is found in the chromosome. The enzyme catalyses L-lysyl(9)-[histone H3] + 3 S-adenosyl-L-methionine = N(6),N(6),N(6)-trimethyl-L-lysyl(9)-[histone H3] + 3 S-adenosyl-L-homocysteine + 3 H(+). Functionally, histone methyltransferase that specifically trimethylates histone H3 to form H3K9me3. H3K9me3 marks chromatin regions for DNA methylation. Plays a key role in the regulation of the biosynthesis of the gamma-pyrones fusapyrone (FPY) and deoxyfusapyrone (dFPY). In Fusarium mangiferae (Mango malformation disease fungus), this protein is Histone-lysine N-methyltransferase, H3 lysine-9 specific KMT1.